A 305-amino-acid chain; its full sequence is Oxygen-dependent coproporphyrinogen-III oxidase (305 aa).

Position 93 (Ser93) interacts with substrate. His97 and His107 together coordinate a divalent metal cation. The active-site Proton donor is the His107. 109 to 111 is a binding site for substrate; it reads NVR. A divalent metal cation contacts are provided by His146 and His176. The segment at 241–276 is important for dimerization; the sequence is YVEFNLVFDRGTLFGLQSGGRTESILMSLPPQVRWG. 259–261 contributes to the substrate binding site; it reads GGR.

Belongs to the aerobic coproporphyrinogen-III oxidase family. Homodimer. A divalent metal cation is required as a cofactor.

The protein resides in the cytoplasm. It catalyses the reaction coproporphyrinogen III + O2 + 2 H(+) = protoporphyrinogen IX + 2 CO2 + 2 H2O. It functions in the pathway porphyrin-containing compound metabolism; protoporphyrin-IX biosynthesis; protoporphyrinogen-IX from coproporphyrinogen-III (O2 route): step 1/1. Involved in the heme biosynthesis. Catalyzes the aerobic oxidative decarboxylation of propionate groups of rings A and B of coproporphyrinogen-III to yield the vinyl groups in protoporphyrinogen-IX. The sequence is that of Oxygen-dependent coproporphyrinogen-III oxidase from Pseudomonas paraeruginosa (strain DSM 24068 / PA7) (Pseudomonas aeruginosa (strain PA7)).